Consider the following 191-residue polypeptide: Glutathione-independent glyoxalase DJ-1 (191 aa).

Catalysis depends on residues Glu-16, Cys-111, and His-130.

It belongs to the peptidase C56 family.

The protein localises to the cytoplasm. Its subcellular location is the nucleus. It catalyses the reaction methylglyoxal + H2O = (R)-lactate + H(+). Functionally, catalyzes the conversion of methylglyoxal (MG) to D-lactate in a single glutathione (GSH)-independent step. May play a role in detoxifying endogenously produced glyoxals. Involved in protection against reactive oxygen species (ROS). This Schizosaccharomyces pombe (strain 972 / ATCC 24843) (Fission yeast) protein is Glutathione-independent glyoxalase DJ-1.